The sequence spans 356 residues: DNA-directed RNA polymerase subunit alpha (356 aa).

The tract at residues 1–259 is alpha N-terminal domain (alpha-NTD); that stretch reads MIKAAATLKS…KLMTACLTTL (259 aa). Residues 277 to 356 are alpha C-terminal domain (alpha-CTD); it reads FVQVNYNKME…STYGIELKED (80 aa).

Belongs to the RNA polymerase alpha chain family. As to quaternary structure, in plastids the minimal PEP RNA polymerase catalytic core is composed of four subunits: alpha, beta, beta', and beta''. When a (nuclear-encoded) sigma factor is associated with the core the holoenzyme is formed, which can initiate transcription.

It is found in the plastid. Its subcellular location is the chloroplast. It carries out the reaction RNA(n) + a ribonucleoside 5'-triphosphate = RNA(n+1) + diphosphate. DNA-dependent RNA polymerase catalyzes the transcription of DNA into RNA using the four ribonucleoside triphosphates as substrates. This Ostreococcus tauri protein is DNA-directed RNA polymerase subunit alpha.